Consider the following 391-residue polypeptide: Decapping nuclease RAI1 (391 aa).

Residue Glu-174 participates in a divalent metal cation binding. Residue Glu-223 coordinates substrate. Positions 225, 244, and 245 each coordinate a divalent metal cation. Positions 246 and 270 each coordinate substrate.

This sequence belongs to the DXO/Dom3Z family. As to quaternary structure, interacts with RAT1; the interaction is direct, stabilizes RAT1 protein structure and stimulates its exoribonuclease activity. The interaction also stimulates RAI1 pyrophosphohydrolase activity, probably by recruiting it to mRNA substrates. Requires a divalent metal cation as cofactor.

It localises to the nucleus. It catalyses the reaction a 5'-end NAD(+)-phospho-ribonucleoside in mRNA + H2O = a 5'-end phospho-ribonucleoside in mRNA + NAD(+) + H(+). The catalysed reaction is a 5'-end (N(7)-methyl 5'-triphosphoguanosine)-ribonucleoside-ribonucleotide in mRNA + H2O = a (N(7)-methyl 5'-triphosphoguanosine)-nucleoside + a 5'-end phospho-ribonucleoside in mRNA + H(+). It carries out the reaction a 5'-end triphospho-ribonucleoside in mRNA + H2O = a 5'-end phospho-ribonucleoside in mRNA + diphosphate + H(+). Functionally, decapping enzyme for NAD-capped RNAs: specifically hydrolyzes the nicotinamide adenine dinucleotide (NAD) cap from a subset of RNAs by removing the entire NAD moiety from the 5'-end of an NAD-capped RNA. The NAD-cap is present at the 5'-end of some RNAs and snoRNAs. In contrast to the canonical 5'-end N7 methylguanosine (m7G) cap, the NAD cap promotes mRNA decay. Also acts as a non-canonical decapping enzyme that removes the entire cap structure of m7G capped or incompletely capped RNAs. Has decapping activity toward incomplete 5'-end m7G cap mRNAs such as unmethylated 5'-end-capped RNA (cap0), while it has no activity toward 2'-O-ribose methylated m7G cap (cap1). Also possesses RNA 5'-pyrophosphohydrolase activity by hydrolyzing the 5'-end triphosphate to release pyrophosphates. Stimulates exoribonuclease activity of Rat1, allowing it to degrade RNAs with stable secondary structure more effectively. The polypeptide is Decapping nuclease RAI1 (Candida albicans (strain SC5314 / ATCC MYA-2876) (Yeast)).